The following is a 460-amino-acid chain: ATP synthase subunit beta (460 aa).

An ATP-binding site is contributed by 150–157 (GGAGVGKT).

It belongs to the ATPase alpha/beta chains family. F-type ATPases have 2 components, CF(1) - the catalytic core - and CF(0) - the membrane proton channel. CF(1) has five subunits: alpha(3), beta(3), gamma(1), delta(1), epsilon(1). CF(0) has three main subunits: a(1), b(2) and c(9-12). The alpha and beta chains form an alternating ring which encloses part of the gamma chain. CF(1) is attached to CF(0) by a central stalk formed by the gamma and epsilon chains, while a peripheral stalk is formed by the delta and b chains.

Its subcellular location is the cell inner membrane. It catalyses the reaction ATP + H2O + 4 H(+)(in) = ADP + phosphate + 5 H(+)(out). Produces ATP from ADP in the presence of a proton gradient across the membrane. The catalytic sites are hosted primarily by the beta subunits. This chain is ATP synthase subunit beta, found in Enterobacter sp. (strain 638).